A 156-amino-acid polypeptide reads, in one-letter code: Ribosome maturation factor RimP (156 aa).

Belongs to the RimP family.

It localises to the cytoplasm. Required for maturation of 30S ribosomal subunits. This Bacillus cereus (strain B4264) protein is Ribosome maturation factor RimP.